The primary structure comprises 180 residues: NADH-quinone oxidoreductase subunit I (180 aa).

4Fe-4S ferredoxin-type domains lie at L50–A80 and E90–D119. [4Fe-4S] cluster is bound by residues C60, C63, C66, C70, C99, C102, C105, and C109.

It belongs to the complex I 23 kDa subunit family. In terms of assembly, NDH-1 is composed of 13 different subunits. Subunits NuoA, H, J, K, L, M, N constitute the membrane sector of the complex. The cofactor is [4Fe-4S] cluster.

The protein resides in the cell inner membrane. It catalyses the reaction a quinone + NADH + 5 H(+)(in) = a quinol + NAD(+) + 4 H(+)(out). Functionally, NDH-1 shuttles electrons from NADH, via FMN and iron-sulfur (Fe-S) centers, to quinones in the respiratory chain. The immediate electron acceptor for the enzyme in this species is believed to be ubiquinone. Couples the redox reaction to proton translocation (for every two electrons transferred, four hydrogen ions are translocated across the cytoplasmic membrane), and thus conserves the redox energy in a proton gradient. This chain is NADH-quinone oxidoreductase subunit I, found in Pectobacterium atrosepticum (strain SCRI 1043 / ATCC BAA-672) (Erwinia carotovora subsp. atroseptica).